Here is a 179-residue protein sequence, read N- to C-terminus: Tegument protein UL55 homolog (179 aa).

It belongs to the alphaherpesvirinae HHV-1 UL55 family.

It localises to the virion tegument. It is found in the host nucleus matrix. In Homo sapiens (Human), this protein is Tegument protein UL55 homolog.